A 152-amino-acid chain; its full sequence is Flagellar assembly factor FliW (152 aa).

The protein belongs to the FliW family. Interacts with translational regulator CsrA and flagellin(s).

It localises to the cytoplasm. Functionally, acts as an anti-CsrA protein, binds CsrA and prevents it from repressing translation of its target genes, one of which is flagellin. Binds to flagellin and participates in the assembly of the flagellum. This is Flagellar assembly factor FliW from Caldicellulosiruptor bescii (strain ATCC BAA-1888 / DSM 6725 / KCTC 15123 / Z-1320) (Anaerocellum thermophilum).